Consider the following 240-residue polypeptide: Adenylate dimethylallyltransferase (240 aa).

Belongs to the isopentenyl transferase family.

The enzyme catalyses dimethylallyl diphosphate + AMP = N(6)-(dimethylallyl)adenosine 5'-phosphate + diphosphate. Transfers dimethylallyl groups to AMP as part of the biosynthesis of cytokinin phytohormones. The sequence is that of Adenylate dimethylallyltransferase (izt) from Agrobacterium tumefaciens (strain Ach5).